The chain runs to 426 residues: Tyrosine--tRNA ligase (426 aa).

Tyr38 contacts L-tyrosine. Positions 43–52 (PTADSLHIGS) match the 'HIGH' region motif. L-tyrosine-binding residues include Tyr176 and Gln180. Residues 236–240 (KFGKT) carry the 'KMSKS' region motif. Lys239 provides a ligand contact to ATP. In terms of domain architecture, S4 RNA-binding spans 359–426 (QTIVEVLTQS…KKLFNLYIWK (68 aa)).

Belongs to the class-I aminoacyl-tRNA synthetase family. TyrS type 1 subfamily. In terms of assembly, homodimer.

It is found in the cytoplasm. The enzyme catalyses tRNA(Tyr) + L-tyrosine + ATP = L-tyrosyl-tRNA(Tyr) + AMP + diphosphate + H(+). Catalyzes the attachment of tyrosine to tRNA(Tyr) in a two-step reaction: tyrosine is first activated by ATP to form Tyr-AMP and then transferred to the acceptor end of tRNA(Tyr). This chain is Tyrosine--tRNA ligase, found in Aliivibrio salmonicida (strain LFI1238) (Vibrio salmonicida (strain LFI1238)).